A 686-amino-acid chain; its full sequence is Homoaconitase, mitochondrial (686 aa).

The N-terminal 17 residues, 1–17 (MRVVRCVRRFSASRAVS), are a transit peptide targeting the mitochondrion. Residues Cys337, Cys401, and Cys404 each contribute to the [4Fe-4S] cluster site.

It belongs to the aconitase/IPM isomerase family. It depends on [4Fe-4S] cluster as a cofactor.

It is found in the mitochondrion. It catalyses the reaction (2R,3S)-homoisocitrate = cis-homoaconitate + H2O. It participates in amino-acid biosynthesis; L-lysine biosynthesis via AAA pathway; L-alpha-aminoadipate from 2-oxoglutarate: step 3/5. Catalyzes the reversible hydration of cis-homoaconitate to (2R,3S)-homoisocitrate, a step in the alpha-aminoadipate pathway for lysine biosynthesis. The chain is Homoaconitase, mitochondrial (LYS4) from Eremothecium gossypii (strain ATCC 10895 / CBS 109.51 / FGSC 9923 / NRRL Y-1056) (Yeast).